Here is a 402-residue protein sequence, read N- to C-terminus: Thyroid hormone receptor alpha (402 aa).

The tract at residues 1 to 22 (MEQKPSTLDPLSEPEDTRWLDG) is disordered. The modulating stretch occupies residues 1–50 (MEQKPSTLDPLSEPEDTRWLDGKRKRKSSQCLVKSSMSGYIPSYLDKDEQ). Phosphoserine; by CK2 is present on serine 12. A Phosphoserine modification is found at serine 28. Zn(2+) is bound by residues cysteine 51, cysteine 54, cysteine 68, cysteine 71, cysteine 89, cysteine 95, cysteine 105, and cysteine 108. 2 NR C4-type zinc fingers span residues 51-71 (CVVC…CAGC) and 89-113 (CKYD…FKKC). The segment at residues 51 to 125 (CVVCGDKATG…VGMAMDLVLY (75 aa)) is a DNA-binding region (nuclear receptor). Residues 161-402 (EEWELIHVVT…ELFPPLFLEV (242 aa)) enclose the NR LBD domain. 2 residues coordinate 3,3',5-triiodo-L-thyronine: arginine 226 and serine 275.

Belongs to the nuclear hormone receptor family. NR1 subfamily. As to quaternary structure, probably interacts with SFPQ.

It localises to the nucleus. Functionally, nuclear hormone receptor that can act as a repressor or activator of transcription. High affinity receptor for thyroid hormones, including triiodothyronine and thyroxine. This Pygoscelis adeliae (Adelie penguin) protein is Thyroid hormone receptor alpha (THRA).